Here is a 364-residue protein sequence, read N- to C-terminus: Hepatitis A virus cellular receptor 1 (364 aa).

The N-terminal stretch at 1–20 (MHPQVVILSLILHLADSVAG) is a signal peptide. Positions 21–121 (SVKVGGEAGP…WFNDMKITVS (101 aa)) constitute an Ig-like V-type domain. Residues 21–295 (SVKVGGEAGP…SLLTANTTKG (275 aa)) are Extracellular-facing. 3 disulfides stabilise this stretch: Cys-36–Cys-105, Cys-46–Cys-57, and Cys-52–Cys-104. Asn-65 is a glycosylation site (N-linked (GlcNAc...) asparagine). 12 consecutive repeat copies span residues 138–143 (VPTVTT), 144–149 (VRTSTT), 150–155 (VPTTTT), 156–160 (VPMTT), 161–165 (VPTTT), 166–171 (VPTTMS), 172–177 (IPTTTT), 178–183 (VLTTMT), 184–189 (VSTTTS), 190–195 (VPTTTS), 196–201 (IPTTTS), and 202–207 (VPVTTT). Residues 138-207 (VPTVTTVRTS…TTTSVPVTTT (70 aa)) are 12 X 6 AA approximate tandem repeats of V-P-T-T-T-T]. Positions 216–257 (PLPRQNHEPVATSPSSPQPAETHPTTLQGAIRREPTSSPLYS) are disordered. Over residues 227 to 243 (TSPSSPQPAETHPTTLQ) the composition is skewed to polar residues. 3 N-linked (GlcNAc...) asparagine glycosylation sites follow: Asn-263, Asn-277, and Asn-291. A helical membrane pass occupies residues 296 to 316 (IYAGVCISVLVLLALLGVIIA). The Cytoplasmic portion of the chain corresponds to 317-364 (KKYFFKKEVQQLSVSFSSLQIKALQNAVEKEVQAEDNIYIENSLYATD). Residues Lys-338 and Lys-346 each participate in a glycyl lysine isopeptide (Lys-Gly) (interchain with G-Cter in ubiquitin) cross-link.

The protein belongs to the immunoglobulin superfamily. TIM family. In terms of assembly, interacts with STAM. Interacts with SELPLG. As to quaternary structure, (Microbial infection) Interacts with hepatitis A virus capsid proteins. (Microbial infection) Interacts with Ebolavirus envelope glycoprotein GP. In terms of assembly, (Microbial infection) Interacts with Zika virus envelope protein E. In terms of processing, ubiquitinated at two lysine residues Lys-338 and Lys-346 on its cytoplasmic domain. Ubiquitination promotes receptor endocytosis and target receptors for lysosomal degradation and termination of receptor signaling. Post-translationally, (Microbial infection) Ubiquitination is required for Dengue virus endocytosis. Widely expressed, with highest levels in kidney and testis. Expressed by activated CD4+ T-cells during the development of helper T-cells responses.

Its subcellular location is the cell membrane. Phosphatidylserine receptor that plays an important functional role in regulatory B-cells homeostasis including generation, expansion and suppressor functions. As P-selectin/SELPLG ligand, plays a specialized role in activated but not naive T-cell trafficking during inflammatory responses. Controls thereby T-cell accumulation in the inflamed central nervous system (CNS) and the induction of autoimmune disease. Also regulates expression of various anti-inflammatory cytokines and co-inhibitory ligands including IL10. Acts as a regulator of T-cell proliferation. May play a role in kidney injury and repair. Functionally, (Microbial infection) Acts as a receptor for Hepatitis A virus. In terms of biological role, (Microbial infection) Acts as a receptor for Ebolavirus and Marburg virus by binding exposed phosphatidyl-serine at the surface of virion membrane. Serves as a dual receptor for Ebolavirus by also interacting with envelope glycoprotein GP. Its function is as follows. (Microbial infection) Acts as a receptor for Dengue virus by binding exposed phosphatidyl-serine at the surface of virion membrane. TIM1 and Dengue virus are co-internalized during virus entry. (Microbial infection) Acts as a receptor for Zika virus by binding to envelope protein E. Functionally, (Microbial infection) Plays a positive role in Chikungunya virus cell entry. The sequence is that of Hepatitis A virus cellular receptor 1 (HAVCR1) from Homo sapiens (Human).